Consider the following 149-residue polypeptide: Large ribosomal subunit protein bL9 (149 aa).

Belongs to the bacterial ribosomal protein bL9 family.

Binds to the 23S rRNA. The sequence is that of Large ribosomal subunit protein bL9 from Helicobacter pylori (strain J99 / ATCC 700824) (Campylobacter pylori J99).